The chain runs to 271 residues: Integral membrane protein 2C (271 aa).

T41 bears the Phosphothreonine mark. Residues 59 to 79 (VGGVCYLSMGMVVLLMGLVFA) traverse the membrane as a helical; Signal-anchor for type II membrane protein segment. In terms of domain architecture, BRICHOS spans 140–234 (FGGGDPADII…LCSGKDTYRL (95 aa)). Cysteines 167 and 226 form a disulfide. N173 carries N-linked (GlcNAc...) asparagine glycosylation.

Belongs to the ITM2 family. Interacts with BACE1. Interacts with APP. Interacts with STMN2. Post-translationally, type I membrane-bound, as well as soluble, furin has a pre-eminent role in ITM2C proteolytic processing. PCSK7 and PCSK5 may also be involved although to a lesser extent. The soluble form of PCSK7 is incapable of processing ITM2C. Fails to undergo shedding by ADAM10 and intramembrane cleavage by SPPL2B.

Its subcellular location is the lysosome membrane. The protein resides in the cell membrane. Its function is as follows. Negative regulator of amyloid-beta peptide production. May inhibit the processing of APP by blocking its access to alpha- and beta-secretase. Binding to the beta-secretase-cleaved APP C-terminal fragment is negligible, suggesting that ITM2C is a poor gamma-secretase cleavage inhibitor. May play a role in TNF-induced cell death and neuronal differentiation. This chain is Integral membrane protein 2C (ITM2C), found in Bos taurus (Bovine).